The primary structure comprises 353 residues: Endophilin-A3 (353 aa).

The interval 1–21 (MSVAGLKKQFHKASQLFSEKI) is membrane-binding amphipathic helix. A BAR domain is found at 18–249 (SEKISGAEGT…LQNRINVASS (232 aa)). The segment at 60–87 (PNPAYRAKLGMLNTMSKIRGQVKTTGYP) is required for dimerization upon membrane association. Positions 180-201 (DEEVKQAVEKFEESKELAERSM) form a coiled coil. The interval 218 to 254 (FVEAALDYHKQSTEILEDLQSKLQNRINVASSRPKRE) is interaction with ARC. The region spanning 291–350 (VDQPCCQALYDFEPENEGELGFKEGDIITLTNQIDENWYEGMLNGESGFFPHNYVEVMVP) is the SH3 domain.

This sequence belongs to the endophilin family. As to quaternary structure, interacts with ARC. Interacts with SYNJ1 and DNM1. As to expression, highest level in a region associated with endocytosis of yolk proteins in developing oocytes (at protein level). Highest level in small ovarian follicles. High levels in brain and testis. Lower level in adrenal glands.

The protein localises to the cytoplasm. It is found in the early endosome membrane. In terms of biological role, implicated in endocytosis. May recruit other proteins to membranes with high curvature. Implicated in endocytosis of yolk proteins during oogenesis. This is Endophilin-A3 from Gallus gallus (Chicken).